Reading from the N-terminus, the 1093-residue chain is Probable phosphorylase b kinase regulatory subunit beta (1093 aa).

Residues 1–27 (MRDVPKSLGLSVTTPGGSSGAPDSGRH) are disordered. 3 calmodulin-binding regions span residues 6 to 27 (KSLG…SGRH), 751 to 778 (QLYH…IVDS), and 905 to 936 (EKLT…ILQR). Cysteine 1090 carries the S-farnesyl cysteine lipid modification.

It belongs to the phosphorylase b kinase regulatory chain family. Although the final Cys may be farnesylated, the terminal tripeptide is probably not removed, and the C-terminus is not methylated.

The protein localises to the cell membrane. It participates in glycan biosynthesis; glycogen metabolism. In terms of biological role, phosphorylase b kinase catalyzes the phosphorylation of serine in certain substrates, including troponin I. The beta chain acts as a regulatory unit and modulates the activity of the holoenzyme in response to phosphorylation. This is Probable phosphorylase b kinase regulatory subunit beta from Drosophila melanogaster (Fruit fly).